Reading from the N-terminus, the 157-residue chain is NAD(P)H-quinone oxidoreductase subunit N (157 aa).

It belongs to the complex I NdhN subunit family. As to quaternary structure, NDH-1 can be composed of about 15 different subunits; different subcomplexes with different compositions have been identified which probably have different functions.

It localises to the cellular thylakoid membrane. It carries out the reaction a plastoquinone + NADH + (n+1) H(+)(in) = a plastoquinol + NAD(+) + n H(+)(out). The catalysed reaction is a plastoquinone + NADPH + (n+1) H(+)(in) = a plastoquinol + NADP(+) + n H(+)(out). NDH-1 shuttles electrons from an unknown electron donor, via FMN and iron-sulfur (Fe-S) centers, to quinones in the respiratory and/or the photosynthetic chain. The immediate electron acceptor for the enzyme in this species is believed to be plastoquinone. Couples the redox reaction to proton translocation, and thus conserves the redox energy in a proton gradient. Cyanobacterial NDH-1 also plays a role in inorganic carbon-concentration. This chain is NAD(P)H-quinone oxidoreductase subunit N, found in Picosynechococcus sp. (strain ATCC 27264 / PCC 7002 / PR-6) (Agmenellum quadruplicatum).